The chain runs to 907 residues: Leucine-rich repeat-containing G-protein coupled receptor 5 (907 aa).

The N-terminal stretch at 1–21 (MDTSRLGVLLSLPVLLQLATG) is a signal peptide. Over 22–561 (GSSPRSGVLL…EHLLDGWLIR (540 aa)) the chain is Extracellular. An LRRNT domain is found at 25 to 66 (PRSGVLLRGCPTHCHCEPDGRMLLRVDCSDLGLSELPSNLSV). Disulfide bonds link Cys34-Cys40 and Cys38-Cys52. 2 N-linked (GlcNAc...) asparagine glycosylation sites follow: Asn63 and Asn77. LRR repeat units follow at residues 67-90 (FTSYLDLSMNNISQLLPNPLPSLR), 91-112 (FLEELRLAGNALTYIPKGAFTG), 115-136 (SLKVLMLQNNQLRHVPTEALQN), 139-160 (SLQSLRLDANHISYVPPSCFSG), 163-184 (SLRHLWLDDNALTEIPVQAFRS), 187-208 (ALQAMTLALNKIHHIPDYAFGN), 211-232 (SLVVLHLHNNRIHSLGKKCFDG), 235-256 (SLETLDLNYNNLDEFPTAIRTL), 258-279 (NLKELGFHSNNIRSIPEKAFVG), 282-303 (SLITIHFYDNPIQFVGRSAFQH), 306-328 (ELRTLTLNGASQITEFPDLTGTA), 329-350 (NLESLTLTGAQISSLPQTVCNQ), 353-374 (NLQVLDLSYNLLEDLPSFSVCQ), 375-396 (KLQKIDLRHNEIYEIKVDTFQQ), 399-420 (SLRSLNLAWNKIAIIHPNAFST), and 423-446 (SLIKLDLSSNLLSSFPITGLHGLT). Asn208 carries N-linked (GlcNAc...) asparagine glycosylation. Cys348 and Cys373 are joined by a disulfide. Cys479 and Cys541 form a disulfide bridge. N-linked (GlcNAc...) asparagine glycosylation is present at Asn500. Residues 562 to 582 (IGVWTIAVLALTCNALVTSTV) form a helical membrane-spanning segment. At 583–593 (FRSPLYISPIK) the chain is on the cytoplasmic side. The chain crosses the membrane as a helical span at residues 594–614 (LLIGVIAAVNMLTGVSSAVLA). Over 615 to 638 (GVDAFTFGSFARHGAWWENGVGCH) the chain is Extracellular. A disulfide bridge links Cys637 with Cys712. A helical transmembrane segment spans residues 639 to 659 (VIGFLSIFASESSVFLLTLAA). Over 660–682 (LERGFSVKYSAKFETKAPFSSLK) the chain is Cytoplasmic. Residues 683 to 703 (VIILLCALLALTMAAVPLLGG) form a helical membrane-spanning segment. Residues 704-722 (SKYGASPLCLPLPFGEPST) lie on the Extracellular side of the membrane. Residues 723–743 (MGYMVALILLNSLCFLMMTIA) traverse the membrane as a helical segment. Residues 744–767 (YTKLYCNLDKGDLENIWDCSMVKH) are Cytoplasmic-facing. A helical membrane pass occupies residues 768–788 (IALLLFTNCILNCPVAFLSFS). Topologically, residues 789–802 (SLINLTFISPEVIK) are extracellular. Residue Asn792 is glycosylated (N-linked (GlcNAc...) asparagine). Residues 803 to 823 (FILLVVVPLPACLNPLLYILF) form a helical membrane-spanning segment. Topologically, residues 824–907 (NPHFKEDLVS…LSSVAFVPCL (84 aa)) are cytoplasmic.

It belongs to the G-protein coupled receptor 1 family. Identified in a complex composed of RNF43, LGR5 and RSPO1. Also interacts with other R-spondin ligands, including RSPO2, RSPO3 and RSPO4. As to expression, expressed in skeletal muscle, placenta, spinal cord, and various region of brain. Expressed at the base of crypts in colonic and small mucosa stem cells. In premalignant cancer expression is not restricted to the cript base. Overexpressed in cancers of the ovary, colon and liver.

It is found in the cell membrane. It localises to the golgi apparatus. The protein localises to the trans-Golgi network membrane. Receptor for R-spondins that potentiates the canonical Wnt signaling pathway and acts as a stem cell marker of the intestinal epithelium and the hair follicle. Upon binding to R-spondins (RSPO1, RSPO2, RSPO3 or RSPO4), associates with phosphorylated LRP6 and frizzled receptors that are activated by extracellular Wnt receptors, triggering the canonical Wnt signaling pathway to increase expression of target genes. In contrast to classical G-protein coupled receptors, does not activate heterotrimeric G-proteins to transduce the signal. Involved in the development and/or maintenance of the adult intestinal stem cells during postembryonic development. The chain is Leucine-rich repeat-containing G-protein coupled receptor 5 (LGR5) from Homo sapiens (Human).